A 272-amino-acid chain; its full sequence is MANSDKRLFEKVAIITGGARGIGAATARLFTENGAYVIVADILENEGILVAESIGGCYVHCDVSKEADVEAAVELAMRRKGRLDVMFNNAGMSLNEGSIMGMDVDMVNKLVSVNVNGVLHGIKHAAKAMIKGGRGGSIICTSSSSGLMGGLGGHAYTLSKGAINGVVRTTACELGSHGIRVNSISPHGVPTDILVNAYRKFLNHDKLNVAEVTDIIAEKGSLLTGRAGTVEDVAQAALFLASQESSGFITGHNLVVDGGYTSATSTMRFIYN.

14 to 38 (IITGGARGIGAATARLFTENGAYVI) contacts NADP(+). Position 143 (serine 143) interacts with substrate. Tyrosine 156 acts as the Proton acceptor in catalysis. Lysine 160 contributes to the NADP(+) binding site.

Belongs to the short-chain dehydrogenases/reductases (SDR) family. In terms of tissue distribution, expressed specifically in tapetal cells.

Functionally, may play a role in tapetum development. The chain is Short-chain dehydrogenase reductase ATA1 from Arabidopsis thaliana (Mouse-ear cress).